A 280-amino-acid chain; its full sequence is Small ribosomal subunit protein uS3 (280 aa).

The region spanning 38–106 is the KH type-2 domain; it reads IRRLLSTGLE…QVQLNILEVR (69 aa). The tract at residues 215–280 is disordered; sequence AAAAPAGAER…PAAEPQSTES (66 aa). A compositionally biased stretch (low complexity) spans 238–280; the sequence is SGASGTTATGTEAGRAAASADESTAAGQPAEAAPAAEPQSTES.

It belongs to the universal ribosomal protein uS3 family. As to quaternary structure, part of the 30S ribosomal subunit. Forms a tight complex with proteins S10 and S14.

In terms of biological role, binds the lower part of the 30S subunit head. Binds mRNA in the 70S ribosome, positioning it for translation. This is Small ribosomal subunit protein uS3 from Mycolicibacterium paratuberculosis (strain ATCC BAA-968 / K-10) (Mycobacterium paratuberculosis).